We begin with the raw amino-acid sequence, 152 residues long: Putative pre-16S rRNA nuclease (152 aa).

It belongs to the YqgF nuclease family.

Its subcellular location is the cytoplasm. Functionally, could be a nuclease involved in processing of the 5'-end of pre-16S rRNA. The polypeptide is Putative pre-16S rRNA nuclease (Synechocystis sp. (strain ATCC 27184 / PCC 6803 / Kazusa)).